Consider the following 232-residue polypeptide: Ribosome maturation protein SDO1 homolog (232 aa).

Belongs to the SDO1/SBDS family.

This Methanothermobacter thermautotrophicus (strain ATCC 29096 / DSM 1053 / JCM 10044 / NBRC 100330 / Delta H) (Methanobacterium thermoautotrophicum) protein is Ribosome maturation protein SDO1 homolog.